The following is a 42-amino-acid chain: MRDLKTYLSVAPVLSTLWFVSLAGLLIEINRLFPDALTFPFF.

The helical transmembrane segment at 7–27 threads the bilayer; sequence YLSVAPVLSTLWFVSLAGLLI.

The protein belongs to the PsaJ family.

The protein localises to the plastid. Its subcellular location is the chloroplast thylakoid membrane. Its function is as follows. May help in the organization of the PsaE and PsaF subunits. This Capsella bursa-pastoris (Shepherd's purse) protein is Photosystem I reaction center subunit IX.